A 340-amino-acid polypeptide reads, in one-letter code: Dof zinc finger protein DOF2.2 (340 aa).

The tract at residues 12-33 (PPINWPQSANPNNHPHHHQLQE) is disordered. A Dof-type zinc finger spans residues 94-148 (LKCPRCDSANTKFCYFNNYNLTQPRHFCKACRRYWTRGGALRNVPVGGGCRRNKK). Residues C96, C99, C121, and C124 each contribute to the Zn(2+) site. 2 disordered regions span residues 138–180 (PVGG…TSNV) and 301–340 (GNIS…QHLM). A compositionally biased stretch (low complexity) spans 151 to 165 (SGNSKSSSSSQNKQS). Polar residues-rich tracts occupy residues 166-180 (TSMV…TSNV) and 309-331 (GLTS…GSSS).

It localises to the nucleus. Its function is as follows. Transcription factor that binds specifically to a 5'-AA[AG]G-3' consensus core sequence. This is Dof zinc finger protein DOF2.2 (DOF2.2) from Arabidopsis thaliana (Mouse-ear cress).